We begin with the raw amino-acid sequence, 351 residues long: S-adenosylmethionine:tRNA ribosyltransferase-isomerase (351 aa).

The protein belongs to the QueA family. Monomer.

It is found in the cytoplasm. The catalysed reaction is 7-aminomethyl-7-carbaguanosine(34) in tRNA + S-adenosyl-L-methionine = epoxyqueuosine(34) in tRNA + adenine + L-methionine + 2 H(+). The protein operates within tRNA modification; tRNA-queuosine biosynthesis. Transfers and isomerizes the ribose moiety from AdoMet to the 7-aminomethyl group of 7-deazaguanine (preQ1-tRNA) to give epoxyqueuosine (oQ-tRNA). This Phocaeicola vulgatus (strain ATCC 8482 / DSM 1447 / JCM 5826 / CCUG 4940 / NBRC 14291 / NCTC 11154) (Bacteroides vulgatus) protein is S-adenosylmethionine:tRNA ribosyltransferase-isomerase.